The chain runs to 620 residues: Cilia- and flagella-associated protein 52 (620 aa).

11 WD repeats span residues 62–106, 109–150, 156–195, 288–327, 330–369, 372–411, 415–454, 459–498, 500–539, 543–582, and 585–620; these read GHGN…LLAR, LHKG…AICG, LNVG…RKIW, QLQG…ETLI, CHFD…ELLR, VPNM…LMYV, AHRI…QKLE, EHKS…RNQM, LANT…VIRE, SLSG…VTHV, and GHSG…PYTS.

It belongs to the CFAP52 family. Microtubule inner protein component of sperm flagellar doublet microtubules. Interacts with BRCA2. Interacts with the CCT chaperonin complex. Interacts with HSP70. Interacts with AK8. Interacts with CFAP45. Interacts with DNAI1. Interacts with IQDC. As to expression, expressed in respiratory cells and sperm (at protein level). Highly expressed in testis. Up-regulated in hepatocellular carcinoma (HCC).

The protein resides in the cytoplasm. Its subcellular location is the cytoskeleton. It is found in the cilium axoneme. It localises to the flagellum axoneme. In terms of biological role, microtubule inner protein (MIP) part of the dynein-decorated doublet microtubules (DMTs) in cilia axoneme. Important for proper ciliary and flagellar beating. May act in cooperation with CFAP45 and axonemal dynein subunit DNAH11. May play a role in cell growth and/or survival. This Homo sapiens (Human) protein is Cilia- and flagella-associated protein 52.